A 645-amino-acid polypeptide reads, in one-letter code: Alkyldihydroxyacetonephosphate synthase, peroxisomal (645 aa).

Low complexity predominate over residues 1–10 (MAEAAAGEAG). The transit peptide at 1–45 (MAEAAAGEAGASERDPDAGRARRRLRVLSGHLLGRPQEAPSTNEC) directs the protein to the peroxisome. The segment at 1–72 (MAEAAAGEAG…AAPESGTIPK (72 aa)) is disordered. Basic and acidic residues predominate over residues 11 to 20 (ASERDPDAGR). Low complexity predominate over residues 50–69 (AASAAGASPAATPAAPESGT). Phosphoserine occurs at positions 52 and 57. Residue Thr-61 is modified to Phosphothreonine. Lys-89 is modified (N6-acetyllysine). Positions 189–371 (FERIPDIVVW…TEATIKIRPT (183 aa)) constitute an FAD-binding PCMH-type domain. Residues 221–227 (PIGGGTS), 290–296 (DSLEFST), and 303–306 (TRAS) each bind FAD. Position 334 is an N6-acetyllysine (Lys-334). 355–361 (EGTLGVI) is a binding site for FAD. Arg-502 contacts substrate. Tyr-565 acts as the Proton donor/acceptor in catalysis. Important for enzyme activity regions lie at residues 602 to 604 (HHH) and 641 to 645 (NRNLL).

It belongs to the FAD-binding oxidoreductase/transferase type 4 family. As to quaternary structure, homodimer. FAD is required as a cofactor.

It localises to the peroxisome membrane. The protein resides in the peroxisome. The catalysed reaction is a long chain fatty alcohol + a 1-acylglycerone 3-phosphate = a 1-O-alkylglycerone 3-phosphate + a long-chain fatty acid + H(+). The enzyme catalyses hexadecan-1-ol + 1-hexadecanoylglycerone 3-phosphate = 1-O-hexadecylglycerone 3-phosphate + hexadecanoate + H(+). It catalyses the reaction 1-hexadecanoylglycerone 3-phosphate + a long-chain fatty acid = a 1-acylglycerone 3-phosphate + hexadecanoate. Its pathway is glycerolipid metabolism; ether lipid biosynthesis. Its function is as follows. Catalyzes the exchange of the acyl chain in acyl-dihydroxyacetonephosphate (acyl-DHAP) for a long chain fatty alcohol, yielding the first ether linked intermediate, i.e. alkyl-dihydroxyacetonephosphate (alkyl-DHAP), in the pathway of ether lipid biosynthesis. This is Alkyldihydroxyacetonephosphate synthase, peroxisomal (Agps) from Mus musculus (Mouse).